Here is a 182-residue protein sequence, read N- to C-terminus: Ribosome maturation factor RimM (182 aa).

In terms of domain architecture, PRC barrel spans 103–182 (EDEFYWRELF…RIEVDWDPGF (80 aa)).

Belongs to the RimM family. Binds ribosomal protein uS19.

The protein localises to the cytoplasm. Its function is as follows. An accessory protein needed during the final step in the assembly of 30S ribosomal subunit, possibly for assembly of the head region. Essential for efficient processing of 16S rRNA. May be needed both before and after RbfA during the maturation of 16S rRNA. It has affinity for free ribosomal 30S subunits but not for 70S ribosomes. The sequence is that of Ribosome maturation factor RimM from Vibrio vulnificus (strain CMCP6).